The chain runs to 508 residues: Acyl-CoA-binding domain-containing protein 5 (508 aa).

An ACB domain is found at 44–133 (YETRFEAAVK…MKKIIETMPM (90 aa)). Residues 55–64 (IQSLPKNGSF), 75–79 (YSFYK), Lys-101, and Tyr-120 each bind an acyl-CoA. A disordered region spans residues 175–215 (AKAVNGKAESSDSGAESEEEEAQEELKGAEQSGSDDKKTLK). Residues 181–214 (KAESSDSGAESEEEEAQEELKGAEQSGSDDKKTL) are a coiled coil. Phosphoserine is present on residues Ser-184, Ser-185, Ser-187, Ser-191, Ser-206, and Ser-233. Positions 198–215 (EELKGAEQSGSDDKKTLK) are enriched in basic and acidic residues. The span at 240–260 (SDIHTDSSRSTRSSEDEKPGD) shows a compositional bias: basic and acidic residues. A disordered region spans residues 240-300 (SDIHTDSSRS…LTSDSDSEVY (61 aa)). Ser-303 carries the post-translational modification Phosphoserine. 2 disordered regions span residues 318–340 (PTQH…NGSI) and 353–419 (EVKH…RGSR). Positions 353 to 376 (EVKHGGEDGRSSSGAPHRETRGGE) are enriched in basic and acidic residues. Ser-405 bears the Phosphoserine mark. The span at 408–418 (DGERWGSDRGS) shows a compositional bias: basic and acidic residues. The stretch at 428 to 453 (LVLIRLQEDMQNVLQRLHKLETLTAS) forms a coiled coil. N6-acetyllysine is present on Lys-446. The helical transmembrane segment at 480 to 500 (GALAFAIIWPFIAQWLAHLYY) threads the bilayer.

It belongs to the ATG37 family.

The protein localises to the peroxisome membrane. Functionally, acyl-CoA binding protein which acts as the peroxisome receptor for pexophagy but is dispensable for aggrephagy and nonselective autophagy. Binds medium- and long-chain acyl-CoA esters. The protein is Acyl-CoA-binding domain-containing protein 5 (Acbd5) of Mus musculus (Mouse).